A 298-amino-acid polypeptide reads, in one-letter code: MNPGYRGRFAPSPTGPLHFGSLVGALASWLDARAHGGVWLVRIEDLDGPRTVPGAADDILATLAHFGMTPDEPPVWQSTRDAAYTAALERLVAAGLVYPCGCTRKEIADSLRAAHERHTTLAYPGTCRTGLHGKPARAWRLRVPDGCDAVITFDDRWQHTQSQNLATEVGDFVLKRADGQWAYQLAVVVDDADAGITHVVRGADLLDSTARQIYLQRCLGVPTPEYLHVPVVVDANGEKLSKQTGATALERNDPLPALQAAAAHLGLANDGDLPGGTLDAFYAAATDAWARRFGPRAG.

L-glutamate is bound by residues 8 to 12 (RFAPS) and Glu44. A 'HIGH' region motif is present at residues 11-21 (PSPTGPLHFGS). Zn(2+) is bound by residues Cys100, Cys102, Tyr123, and Cys127. L-glutamate-binding residues include Tyr183 and Arg201. The 'KMSKS' region signature appears at 239-243 (KLSKQ). ATP is bound at residue Lys242.

This sequence belongs to the class-I aminoacyl-tRNA synthetase family. GluQ subfamily. Requires Zn(2+) as cofactor.

Functionally, catalyzes the tRNA-independent activation of glutamate in presence of ATP and the subsequent transfer of glutamate onto a tRNA(Asp). Glutamate is transferred on the 2-amino-5-(4,5-dihydroxy-2-cyclopenten-1-yl) moiety of the queuosine in the wobble position of the QUC anticodon. In Burkholderia orbicola (strain AU 1054), this protein is Glutamyl-Q tRNA(Asp) synthetase.